The sequence spans 184 residues: NADH-quinone oxidoreductase subunit B (184 aa).

The [4Fe-4S] cluster site is built by Cys-37, Cys-38, Cys-103, and Cys-132.

The protein belongs to the complex I 20 kDa subunit family. NDH-1 is composed of 14 different subunits. Subunits NuoB, C, D, E, F, and G constitute the peripheral sector of the complex. The cofactor is [4Fe-4S] cluster.

The protein resides in the cell membrane. It catalyses the reaction a quinone + NADH + 5 H(+)(in) = a quinol + NAD(+) + 4 H(+)(out). NDH-1 shuttles electrons from NADH, via FMN and iron-sulfur (Fe-S) centers, to quinones in the respiratory chain. The immediate electron acceptor for the enzyme in this species is believed to be a menaquinone. Couples the redox reaction to proton translocation (for every two electrons transferred, four hydrogen ions are translocated across the cytoplasmic membrane), and thus conserves the redox energy in a proton gradient. This Mycobacterium bovis (strain BCG / Pasteur 1173P2) protein is NADH-quinone oxidoreductase subunit B.